The following is a 342-amino-acid chain: Holliday junction branch migration complex subunit RuvB (342 aa).

The large ATPase domain (RuvB-L) stretch occupies residues 1-181 (MENRMVTPFD…FGMLCAMEFY (181 aa)). ATP is bound by residues Leu20, Arg21, Gly62, Lys65, Thr66, Thr67, 128–130 (EDY), Arg171, Tyr181, and Arg218. Thr66 contacts Mg(2+). The interval 182 to 252 (TDEELMEIVV…GAKAALDLLE (71 aa)) is small ATPAse domain (RuvB-S). The interval 255-342 (KEGLDKIDNK…KDNQVSIFNK (88 aa)) is head domain (RuvB-H). DNA is bound by residues Arg310 and Arg315.

It belongs to the RuvB family. In terms of assembly, homohexamer. Forms an RuvA(8)-RuvB(12)-Holliday junction (HJ) complex. HJ DNA is sandwiched between 2 RuvA tetramers; dsDNA enters through RuvA and exits via RuvB. An RuvB hexamer assembles on each DNA strand where it exits the tetramer. Each RuvB hexamer is contacted by two RuvA subunits (via domain III) on 2 adjacent RuvB subunits; this complex drives branch migration. In the full resolvosome a probable DNA-RuvA(4)-RuvB(12)-RuvC(2) complex forms which resolves the HJ.

Its subcellular location is the cytoplasm. The catalysed reaction is ATP + H2O = ADP + phosphate + H(+). Its function is as follows. The RuvA-RuvB-RuvC complex processes Holliday junction (HJ) DNA during genetic recombination and DNA repair, while the RuvA-RuvB complex plays an important role in the rescue of blocked DNA replication forks via replication fork reversal (RFR). RuvA specifically binds to HJ cruciform DNA, conferring on it an open structure. The RuvB hexamer acts as an ATP-dependent pump, pulling dsDNA into and through the RuvAB complex. RuvB forms 2 homohexamers on either side of HJ DNA bound by 1 or 2 RuvA tetramers; 4 subunits per hexamer contact DNA at a time. Coordinated motions by a converter formed by DNA-disengaged RuvB subunits stimulates ATP hydrolysis and nucleotide exchange. Immobilization of the converter enables RuvB to convert the ATP-contained energy into a lever motion, pulling 2 nucleotides of DNA out of the RuvA tetramer per ATP hydrolyzed, thus driving DNA branch migration. The RuvB motors rotate together with the DNA substrate, which together with the progressing nucleotide cycle form the mechanistic basis for DNA recombination by continuous HJ branch migration. Branch migration allows RuvC to scan DNA until it finds its consensus sequence, where it cleaves and resolves cruciform DNA. The polypeptide is Holliday junction branch migration complex subunit RuvB (Clostridium botulinum (strain ATCC 19397 / Type A)).